Here is a 508-residue protein sequence, read N- to C-terminus: Steroid 17-alpha-hydroxylase/17,20 lyase (508 aa).

Cysteine 442 lines the heme pocket.

It belongs to the cytochrome P450 family. The cofactor is heme.

It localises to the endoplasmic reticulum membrane. It is found in the microsome membrane. The enzyme catalyses a C21-steroid + reduced [NADPH--hemoprotein reductase] + O2 = a 17alpha-hydroxy-C21-steroid + oxidized [NADPH--hemoprotein reductase] + H2O + H(+). It catalyses the reaction progesterone + reduced [NADPH--hemoprotein reductase] + O2 = 17alpha-hydroxyprogesterone + oxidized [NADPH--hemoprotein reductase] + H2O + H(+). It carries out the reaction pregnenolone + reduced [NADPH--hemoprotein reductase] + O2 = 17alpha-hydroxypregnenolone + oxidized [NADPH--hemoprotein reductase] + H2O + H(+). The catalysed reaction is 17alpha-hydroxyprogesterone + reduced [NADPH--hemoprotein reductase] + O2 = androst-4-ene-3,17-dione + acetate + oxidized [NADPH--hemoprotein reductase] + H2O + 2 H(+). The enzyme catalyses 17alpha-hydroxyprogesterone + reduced [NADPH--hemoprotein reductase] + O2 = 16alpha,17alpha-dihydroxyprogesterone + oxidized [NADPH--hemoprotein reductase] + H2O + H(+). It catalyses the reaction 16alpha,17alpha-dihydroxyprogesterone + reduced [NADPH--hemoprotein reductase] + O2 = 6beta,16alpha,17alpha-trihydroxyprogesterone + oxidized [NADPH--hemoprotein reductase] + H2O + H(+). It carries out the reaction 17alpha-hydroxypregnenolone + reduced [NADPH--hemoprotein reductase] + O2 = 3beta-hydroxyandrost-5-en-17-one + acetate + oxidized [NADPH--hemoprotein reductase] + H2O + 2 H(+). The catalysed reaction is 16alpha,17alpha-dihydroxypregnenolone + reduced [NADPH--hemoprotein reductase] + O2 = 3beta,16alpha-dihydroxy-androst-5-en-17-one + acetate + oxidized [NADPH--hemoprotein reductase] + H2O + 2 H(+). The enzyme catalyses 3beta-hydroxyandrost-5-en-17-one + reduced [NADPH--hemoprotein reductase] + O2 = 3beta,16alpha-dihydroxy-androst-5-en-17-one + oxidized [NADPH--hemoprotein reductase] + H2O + H(+). It catalyses the reaction androst-4-ene-3,17-dione + reduced [NADPH--hemoprotein reductase] + O2 = 16alpha-hydroxyandrost-4-ene-3,17-dione + oxidized [NADPH--hemoprotein reductase] + H2O + H(+). The protein operates within steroid hormone biosynthesis. Its pathway is steroid biosynthesis; glucocorticoid biosynthesis. Regulated predominantly by intracellular cAMP levels. The 17,20-lyase activity is stimulated by cytochrome b5, which acts as an allosteric effector increasing the Vmax of the lyase activity. Functionally, a cytochrome P450 monooxygenase involved in corticoid and androgen biosynthesis. Catalyzes 17-alpha hydroxylation of C21 steroids, which is common for both pathways. A second oxidative step, required only for androgen synthesis, involves an acyl-carbon cleavage. The 17-alpha hydroxy intermediates, as part of adrenal glucocorticoids biosynthesis pathway, are precursors of cortisol. Hydroxylates steroid hormones, pregnenolone and progesterone to form 17-alpha hydroxy metabolites, followed by the cleavage of the C17-C20 bond to form C19 steroids, dehydroepiandrosterone (DHEA) and androstenedione. Has 16-alpha hydroxylase activity. Catalyzes 16-alpha hydroxylation of 17-alpha hydroxy pregnenolone, followed by the cleavage of the C17-C20 bond to form 16-alpha-hydroxy DHEA. Also 16-alpha hydroxylates androgens, relevant for estriol synthesis. Mechanistically, uses molecular oxygen inserting one oxygen atom into a substrate, and reducing the second into a water molecule, with two electrons provided by NADPH via cytochrome P450 reductase (CPR; NADPH-ferrihemoprotein reductase). The chain is Steroid 17-alpha-hydroxylase/17,20 lyase (CYP17A1) from Equus caballus (Horse).